The primary structure comprises 76 residues: uncharacterized protein (76 aa).

A helical membrane pass occupies residues 53 to 70 (STKLHIIWFCIFAIFIAV).

It is found in the membrane. This is an uncharacterized protein from Haemophilus influenzae (strain ATCC 51907 / DSM 11121 / KW20 / Rd).